The sequence spans 542 residues: CTP synthase (542 aa).

Residues 1 to 265 (MARYVFITGG…DSEVLSAFGI (265 aa)) are amidoligase domain. Ser13 contributes to the CTP binding site. Residue Ser13 participates in UTP binding. Residue 14-19 (SLGKGI) participates in ATP binding. Tyr54 contributes to the L-glutamine binding site. Asp71 lines the ATP pocket. Residues Asp71 and Glu139 each contribute to the Mg(2+) site. Residues 146–148 (DIE), 186–191 (KTKPTQ), and Lys222 contribute to the CTP site. Residues 186–191 (KTKPTQ) and Lys222 each bind UTP. In terms of domain architecture, Glutamine amidotransferase type-1 spans 291–541 (TIAVVGKYTG…IEAAIEQSRL (251 aa)). Gly353 contacts L-glutamine. Cys380 functions as the Nucleophile; for glutamine hydrolysis in the catalytic mechanism. Residues 381–384 (FGMQ), Glu404, and Arg469 contribute to the L-glutamine site. Residues His514 and Glu516 contribute to the active site.

This sequence belongs to the CTP synthase family. In terms of assembly, homotetramer.

The enzyme catalyses UTP + L-glutamine + ATP + H2O = CTP + L-glutamate + ADP + phosphate + 2 H(+). It catalyses the reaction L-glutamine + H2O = L-glutamate + NH4(+). The catalysed reaction is UTP + NH4(+) + ATP = CTP + ADP + phosphate + 2 H(+). The protein operates within pyrimidine metabolism; CTP biosynthesis via de novo pathway; CTP from UDP: step 2/2. Its activity is regulated as follows. Allosterically activated by GTP, when glutamine is the substrate; GTP has no effect on the reaction when ammonia is the substrate. The allosteric effector GTP functions by stabilizing the protein conformation that binds the tetrahedral intermediate(s) formed during glutamine hydrolysis. Inhibited by the product CTP, via allosteric rather than competitive inhibition. In terms of biological role, catalyzes the ATP-dependent amination of UTP to CTP with either L-glutamine or ammonia as the source of nitrogen. Regulates intracellular CTP levels through interactions with the four ribonucleotide triphosphates. This chain is CTP synthase, found in Brucella suis (strain ATCC 23445 / NCTC 10510).